Here is a 108-residue protein sequence, read N- to C-terminus: Glutaredoxin-1 (108 aa).

The Glutaredoxin domain maps to 3–106; sequence EEFVQQRLAN…DILSSIGVLR (104 aa). C23 and C26 are oxidised to a cystine.

Belongs to the glutaredoxin family.

The protein resides in the virion. Its function is as follows. Has thioltransferase and dehydroascorbate reductase activities. This Camelpox virus (strain M-96) protein is Glutaredoxin-1 (OPG075).